A 74-amino-acid polypeptide reads, in one-letter code: Large ribosomal subunit protein bL31 (74 aa).

The protein belongs to the bacterial ribosomal protein bL31 family. Type A subfamily. In terms of assembly, part of the 50S ribosomal subunit.

Its function is as follows. Binds the 23S rRNA. This is Large ribosomal subunit protein bL31 from Chlorobaculum parvum (strain DSM 263 / NCIMB 8327) (Chlorobium vibrioforme subsp. thiosulfatophilum).